Consider the following 130-residue polypeptide: Small ribosomal subunit protein uS8 (130 aa).

The protein belongs to the universal ribosomal protein uS8 family. In terms of assembly, part of the 30S ribosomal subunit. Contacts proteins S5 and S12.

In terms of biological role, one of the primary rRNA binding proteins, it binds directly to 16S rRNA central domain where it helps coordinate assembly of the platform of the 30S subunit. The polypeptide is Small ribosomal subunit protein uS8 (Buchnera aphidicola subsp. Acyrthosiphon pisum (strain 5A)).